A 442-amino-acid chain; its full sequence is MASSFCPKQALSFTNSTHQLHQSRAIPRDIHVRFPAPVSSPSSRCGLKSKATTRLKVLATSATKVMDHSSSKASSQAPTVVEVDLGTRSYPIYIGAGLLDQPDLLQRHIHGKRVLVVTNTTVAPLYLDKTISALTDGNPNVTVESVILPDGEQFKNMETLMKVFDKAIESRLDRRCTFVALGGGVIGDMCGYAAASYLRGVNFIQIPTTVMAQVDSSVGGKTGINHPLGKNMIGAFYQPQCVLIDTDTLNTLPDRELASGLAEVIKYGLIRDAEFFEWQEQNMPLLLARDPTAFTYAIKRSCENKADVVSQDEKESGVRATLNLGHTFGHAVETGVGYGQWLHGEAVAAGTVMAVDMSRRLGWIDDSLVQRVQKILQQAKLPTSPPETMTVEMFKSIMAVDKKVADGKLRLILLKGSLGNCVFTGDYDQKALDETLRAFSKS.

The N-terminal 61 residues, M1–S61, are a transit peptide targeting the chloroplast. Residues N119, D150–E152, K155, G183–D188, T208–T209, K221, K230, and T248–T251 each bind NAD(+). Residue E263 coordinates a divalent metal cation. K305 is an NAD(+) binding site. A divalent metal cation contacts are provided by H326 and H343.

The protein belongs to the sugar phosphate cyclases superfamily. Dehydroquinate synthase family. Homodimer. A divalent metal cation is required as a cofactor. NAD(+) serves as cofactor. In terms of tissue distribution, highly expressed in roots. Lower expression in stems, flowers and cotyledons. Barely detected in leaves.

The protein localises to the plastid. It localises to the chloroplast. It carries out the reaction 7-phospho-2-dehydro-3-deoxy-D-arabino-heptonate = 3-dehydroquinate + phosphate. The protein operates within metabolic intermediate biosynthesis; chorismate biosynthesis; chorismate from D-erythrose 4-phosphate and phosphoenolpyruvate: step 2/7. Its function is as follows. Catalyzes the second step in the shikimate pathway. The sequence is that of 3-dehydroquinate synthase, chloroplastic (DHQS) from Solanum lycopersicum (Tomato).